We begin with the raw amino-acid sequence, 234 residues long: Large ribosomal subunit protein uL1 (234 aa).

This sequence belongs to the universal ribosomal protein uL1 family. As to quaternary structure, part of the 50S ribosomal subunit.

Functionally, binds directly to 23S rRNA. The L1 stalk is quite mobile in the ribosome, and is involved in E site tRNA release. Protein L1 is also a translational repressor protein, it controls the translation of the L11 operon by binding to its mRNA. The polypeptide is Large ribosomal subunit protein uL1 (Aliivibrio fischeri (strain ATCC 700601 / ES114) (Vibrio fischeri)).